Here is a 304-residue protein sequence, read N- to C-terminus: tRNA-uridine aminocarboxypropyltransferase 1 (304 aa).

Disordered stretches follow at residues 1–29 (MALS…QTTS) and 165–193 (RNKA…HEST). Residues 180 to 193 (RTTDEEGWDLHEST) show a composition bias toward basic and acidic residues. A DXTW motif is present at residues 206 to 209 (DSTW).

The protein belongs to the TDD superfamily. DTWD1 family.

The protein resides in the nucleus. It carries out the reaction a uridine in tRNA + S-adenosyl-L-methionine = a 3-[(3S)-3-amino-3-carboxypropyl]uridine in tRNA + S-methyl-5'-thioadenosine + H(+). In terms of biological role, catalyzes the formation of 3-(3-amino-3-carboxypropyl)uridine (acp3U) at position 20 in the D-loop of several cytoplasmic tRNAs (acp3U(20)). This is tRNA-uridine aminocarboxypropyltransferase 1 from Mus musculus (Mouse).